The sequence spans 188 residues: dCTP deaminase (188 aa).

Residues 111-116 (KSTYAR), 135-137 (TLE), Gln-156, Tyr-170, Lys-179, and Gln-180 contribute to the dCTP site. The Proton donor/acceptor role is filled by Glu-137.

Belongs to the dCTP deaminase family. Homotrimer.

It carries out the reaction dCTP + H2O + H(+) = dUTP + NH4(+). It functions in the pathway pyrimidine metabolism; dUMP biosynthesis; dUMP from dCTP (dUTP route): step 1/2. Its function is as follows. Catalyzes the deamination of dCTP to dUTP. The chain is dCTP deaminase from Rickettsia akari (strain Hartford).